Here is a 264-residue protein sequence, read N- to C-terminus: S-adenosylmethionine decarboxylase proenzyme (264 aa).

Catalysis depends on serine 113, which acts as the Schiff-base intermediate with substrate; via pyruvic acid. Serine 113 carries the pyruvic acid (Ser); by autocatalysis modification. The Proton acceptor; for processing activity role is filled by histidine 118. Catalysis depends on cysteine 141, which acts as the Proton donor; for catalytic activity.

The protein belongs to the prokaryotic AdoMetDC family. Type 2 subfamily. In terms of assembly, heterooctamer of four alpha and four beta chains arranged as a tetramer of alpha/beta heterodimers. The cofactor is pyruvate. In terms of processing, is synthesized initially as an inactive proenzyme. Formation of the active enzyme involves a self-maturation process in which the active site pyruvoyl group is generated from an internal serine residue via an autocatalytic post-translational modification. Two non-identical subunits are generated from the proenzyme in this reaction, and the pyruvate is formed at the N-terminus of the alpha chain, which is derived from the carboxyl end of the proenzyme. The post-translation cleavage follows an unusual pathway, termed non-hydrolytic serinolysis, in which the side chain hydroxyl group of the serine supplies its oxygen atom to form the C-terminus of the beta chain, while the remainder of the serine residue undergoes an oxidative deamination to produce ammonia and the pyruvoyl group blocking the N-terminus of the alpha chain.

It carries out the reaction S-adenosyl-L-methionine + H(+) = S-adenosyl 3-(methylsulfanyl)propylamine + CO2. Its pathway is amine and polyamine biosynthesis; S-adenosylmethioninamine biosynthesis; S-adenosylmethioninamine from S-adenosyl-L-methionine: step 1/1. Catalyzes the decarboxylation of S-adenosylmethionine to S-adenosylmethioninamine (dcAdoMet), the propylamine donor required for the synthesis of the polyamines spermine and spermidine from the diamine putrescine. In Pseudomonas aeruginosa (strain UCBPP-PA14), this protein is S-adenosylmethionine decarboxylase proenzyme.